A 61-amino-acid polypeptide reads, in one-letter code: Metallothionein-2 (61 aa).

The residue at position 1 (Met-1) is an N-acetylmethionine. Residues 1-29 form a beta region; the sequence is MDPNCSCAAGGSCTCAGSCKCKECRCTSC. A divalent metal cation-binding residues include Cys-5, Cys-7, Cys-13, Cys-15, Cys-19, Cys-21, Cys-24, Cys-26, Cys-29, Cys-33, Cys-34, Cys-36, Cys-37, Cys-41, Cys-44, Cys-48, Cys-50, and Cys-57. Positions 30 to 61 are alpha; that stretch reads KKSCCSCCPVGCAKCAQGCICKGASDKCSCCA. A Phosphoserine modification is found at Ser-58. Cys-59 and Cys-60 together coordinate a divalent metal cation.

The protein belongs to the metallothionein superfamily. Type 1 family. In terms of assembly, interacts with EOLA1.

Functionally, metallothioneins have a high content of cysteine residues that bind various heavy metals; these proteins are transcriptionally regulated by both heavy metals and glucocorticoids. The sequence is that of Metallothionein-2 (MT2A) from Canis lupus familiaris (Dog).